A 227-amino-acid chain; its full sequence is uncharacterized protein (227 aa).

Transmembrane regions (helical) follow at residues 12-32 (IVLF…YLYA) and 80-100 (IILI…KIPL).

It localises to the cell membrane. This is an uncharacterized protein from Methanocaldococcus jannaschii (strain ATCC 43067 / DSM 2661 / JAL-1 / JCM 10045 / NBRC 100440) (Methanococcus jannaschii).